The primary structure comprises 402 residues: Renin (402 aa).

Positions 1–26 are cleaved as a signal peptide; it reads MGGRRMPLWALLLLWTSCSFSLPTDT. The propeptide at 27–64 is activation peptide; sequence ASFGRILLKKMPSVREILEERGVDMTRISAEWGEFIKK. A glycan (N-linked (GlcNAc...) asparagine) is linked at Asn-69. One can recognise a Peptidase A1 domain in the interval 84–399; that stretch reads YYGEIGIGTP…DRHNNRIGFA (316 aa). Residue Asp-102 is part of the active site. Cys-115 and Cys-122 form a disulfide bridge. The N-linked (GlcNAc...) asparagine glycan is linked to Asn-139. Cys-278 and Cys-282 are joined by a disulfide. The active site involves Asp-287. Residue Asn-320 is glycosylated (N-linked (GlcNAc...) asparagine). Cys-321 and Cys-358 are joined by a disulfide.

This sequence belongs to the peptidase A1 family. Interacts with ATP6AP2.

Its subcellular location is the secreted. It is found in the membrane. The catalysed reaction is Cleavage of Leu-|-Xaa bond in angiotensinogen to generate angiotensin I.. Interaction with ATP6AP2 results in a 5-fold increased efficiency in angiotensinogen processing. In terms of biological role, renin is a highly specific endopeptidase, whose only known function is to generate angiotensin I from angiotensinogen in the plasma, initiating a cascade of reactions that produce an elevation of blood pressure and increased sodium retention by the kidney. The protein is Renin (Ren1) of Rattus norvegicus (Rat).